Here is a 109-residue protein sequence, read N- to C-terminus: Ribonuclease (109 aa).

Glutamate 72 (proton acceptor) is an active-site residue. Histidine 101 serves as the catalytic Proton donor.

The protein belongs to the ribonuclease N1/T1 family.

The protein resides in the secreted. Its function is as follows. Hydrolyzes phosphodiester bonds in RNA, poly- and oligoribonucleotides resulting in 3'-nucleoside monophosphates via 2',3'-cyclophosphate intermediates. The protein is Ribonuclease of Heyndrickxia coagulans (Weizmannia coagulans).